We begin with the raw amino-acid sequence, 415 residues long: Homoserine O-succinyltransferase (415 aa).

Residues 69 to 383 enclose the AB hydrolase-1 domain; that stretch reads NAVLVCHALN…PHGHDAFLLD (315 aa). Serine 175 functions as the Nucleophile in the catalytic mechanism. Arginine 245 is a binding site for substrate. Active-site residues include aspartate 344 and histidine 377. Aspartate 378 lines the substrate pocket.

It belongs to the AB hydrolase superfamily. MetX family. In terms of assembly, homodimer.

It localises to the cytoplasm. The enzyme catalyses L-homoserine + succinyl-CoA = O-succinyl-L-homoserine + CoA. Its pathway is amino-acid biosynthesis; L-methionine biosynthesis via de novo pathway; O-succinyl-L-homoserine from L-homoserine: step 1/1. Functionally, transfers a succinyl group from succinyl-CoA to L-homoserine, forming succinyl-L-homoserine. The chain is Homoserine O-succinyltransferase from Bordetella parapertussis (strain 12822 / ATCC BAA-587 / NCTC 13253).